The primary structure comprises 98 residues: Small ribosomal subunit protein bS20 (98 aa).

Residues 1-12 are compositionally biased toward basic residues; that stretch reads MAPRKPSKKVGP. The interval 1–31 is disordered; sequence MAPRKPSKKVGPQKRPSAEKRVITSKKKQLR.

The protein belongs to the bacterial ribosomal protein bS20 family.

Binds directly to 16S ribosomal RNA. This Chlamydia trachomatis serovar A (strain ATCC VR-571B / DSM 19440 / HAR-13) protein is Small ribosomal subunit protein bS20.